The primary structure comprises 189 residues: Xanthine phosphoribosyltransferase (189 aa).

Xanthine contacts are provided by L20 and N27. 127–131 is a 5-phospho-alpha-D-ribose 1-diphosphate binding site; the sequence is AYGNA. K155 contributes to the xanthine binding site.

This sequence belongs to the purine/pyrimidine phosphoribosyltransferase family. Xpt subfamily. Homodimer.

It localises to the cytoplasm. It catalyses the reaction XMP + diphosphate = xanthine + 5-phospho-alpha-D-ribose 1-diphosphate. The protein operates within purine metabolism; XMP biosynthesis via salvage pathway; XMP from xanthine: step 1/1. Functionally, converts the preformed base xanthine, a product of nucleic acid breakdown, to xanthosine 5'-monophosphate (XMP), so it can be reused for RNA or DNA synthesis. This chain is Xanthine phosphoribosyltransferase, found in Bacteroides fragilis (strain ATCC 25285 / DSM 2151 / CCUG 4856 / JCM 11019 / LMG 10263 / NCTC 9343 / Onslow / VPI 2553 / EN-2).